A 267-amino-acid chain; its full sequence is Phosphate import ATP-binding protein PstB 2 (267 aa).

The ABC transporter domain occupies 21–262 (LTTKDLHVYY…AKCQSTSDYV (242 aa)). 53-60 (GPSGCGKS) is a binding site for ATP.

Belongs to the ABC transporter superfamily. Phosphate importer (TC 3.A.1.7) family. The complex is composed of two ATP-binding proteins (PstB), two transmembrane proteins (PstC and PstA) and a solute-binding protein (PstS).

Its subcellular location is the cell membrane. It carries out the reaction phosphate(out) + ATP + H2O = ADP + 2 phosphate(in) + H(+). Functionally, part of the ABC transporter complex PstSACB involved in phosphate import. Responsible for energy coupling to the transport system. This Streptococcus agalactiae serotype Ia (strain ATCC 27591 / A909 / CDC SS700) protein is Phosphate import ATP-binding protein PstB 2.